A 377-amino-acid polypeptide reads, in one-letter code: Nitric oxide reductase FlRd-NAD(+) reductase (377 aa).

It belongs to the FAD-dependent oxidoreductase family. The cofactor is FAD.

Its subcellular location is the cytoplasm. It carries out the reaction 2 reduced [nitric oxide reductase rubredoxin domain] + NAD(+) + H(+) = 2 oxidized [nitric oxide reductase rubredoxin domain] + NADH. Its pathway is nitrogen metabolism; nitric oxide reduction. One of at least two accessory proteins for anaerobic nitric oxide (NO) reductase. Reduces the rubredoxin moiety of NO reductase. The sequence is that of Nitric oxide reductase FlRd-NAD(+) reductase from Escherichia fergusonii (strain ATCC 35469 / DSM 13698 / CCUG 18766 / IAM 14443 / JCM 21226 / LMG 7866 / NBRC 102419 / NCTC 12128 / CDC 0568-73).